Here is a 202-residue protein sequence, read N- to C-terminus: dTTP/UTP pyrophosphatase (202 aa).

Asp71 serves as the catalytic Proton acceptor.

This sequence belongs to the Maf family. YhdE subfamily. It depends on a divalent metal cation as a cofactor.

It is found in the cytoplasm. It catalyses the reaction dTTP + H2O = dTMP + diphosphate + H(+). It carries out the reaction UTP + H2O = UMP + diphosphate + H(+). Its function is as follows. Nucleoside triphosphate pyrophosphatase that hydrolyzes dTTP and UTP. May have a dual role in cell division arrest and in preventing the incorporation of modified nucleotides into cellular nucleic acids. The chain is dTTP/UTP pyrophosphatase from Zymomonas mobilis subsp. mobilis (strain ATCC 31821 / ZM4 / CP4).